We begin with the raw amino-acid sequence, 314 residues long: Mitotic checkpoint protein BUB3.3 (314 aa).

WD repeat units follow at residues 11 to 50 (PIED…LSLE), 52 to 90 (NSQA…VDTI), 92 to 131 (RHDD…SLVF), 134 to 173 (DAGG…QSYA), 176 to 215 (VEVP…SEIK), 229 to 269 (LDGV…RLNE), and 272 to 311 (RYSN…QVFI).

The protein belongs to the WD repeat BUB3 family. As to quaternary structure, part of the mitotic checkpoint complex (MCC).

It localises to the nucleus. The protein resides in the chromosome. Its subcellular location is the centromere. The protein localises to the kinetochore. It is found in the cytoplasm. It localises to the cytoskeleton. The protein resides in the phragmoplast. Its subcellular location is the spindle. Its function is as follows. Has a dual function in spindle-assembly checkpoint signaling and in promoting the establishment of correct kinetochore-microtubule (K-MT) attachments. Promotes the formation of stable end-on bipolar attachments. Necessary for kinetochore localization of BUB1. The BUB1/BUB3 complex plays a role in the inhibition of anaphase-promoting complex or cyclosome (APC/C) when spindle-assembly checkpoint is activated and inhibits the ubiquitin ligase activity of APC/C by phosphorylating its activator CDC20. The protein is Mitotic checkpoint protein BUB3.3 (BUB3.3) of Arabidopsis thaliana (Mouse-ear cress).